A 353-amino-acid polypeptide reads, in one-letter code: Guanine nucleotide-binding protein subunit alpha (353 aa).

The disordered stretch occupies residues 1 to 25; it reads MGCGMSTEDKEGKARNEEIENQLKR. Gly-2 carries the N-myristoyl glycine lipid modification. A lipid anchor (S-palmitoyl cysteine) is attached at Cys-3. Over residues 7 to 25 the composition is skewed to basic and acidic residues; the sequence is TEDKEGKARNEEIENQLKR. The G-alpha domain occupies 32-353; it reads NEIKMLLLGA…QENLRLCGLI (322 aa). The segment at 35–48 is G1 motif; sequence KMLLLGAGESGKST. GTP-binding residues include Glu-43, Ser-44, Gly-45, Lys-46, Ser-47, Thr-48, Asp-150, Leu-175, Thr-181, Gly-203, Asn-269, Lys-270, Asp-272, and Ala-325. Ser-47 provides a ligand contact to Mg(2+). The interval 173–181 is G2 motif; sequence DVLRSRVKT. Thr-181 lines the Mg(2+) pocket. The tract at residues 196–205 is G3 motif; the sequence is YRMFDVGGQR. Residues 265-272 form a G4 motif region; the sequence is ILFLNKID. Positions 323-328 are G5 motif; that stretch reads TCATDT.

Belongs to the G-alpha family. G(q) subfamily. G proteins are composed of 3 units; alpha, beta and gamma. The alpha chain contains the guanine nucleotide binding site. Requires Mg(2+) as cofactor.

Its function is as follows. Guanine nucleotide-binding proteins (G proteins) are involved as modulators or transducers in various transmembrane signaling systems. This chain is Guanine nucleotide-binding protein subunit alpha (CTG1), found in Colletotrichum trifolii.